Here is a 141-residue protein sequence, read N- to C-terminus: Lutropin subunit beta (141 aa).

The signal sequence occupies residues 1 to 20 (MEMLQGLLLLMLLSMGGTWA). Cystine bridges form between Cys-29/Cys-77, Cys-43/Cys-92, Cys-46/Cys-130, Cys-54/Cys-108, Cys-58/Cys-110, and Cys-113/Cys-120. Asn-33 and Asn-50 each carry an N-linked (GlcNAc...) asparagine glycan.

Belongs to the glycoprotein hormones subunit beta family. In terms of assembly, heterodimer of a common alpha chain and a unique beta chain which confers biological specificity to thyrotropin, lutropin, follitropin and gonadotropin.

The protein localises to the secreted. Its function is as follows. Promotes spermatogenesis and ovulation by stimulating the testes and ovaries to synthesize steroids. The chain is Lutropin subunit beta (LHB) from Pongo pygmaeus (Bornean orangutan).